The primary structure comprises 464 residues: tRNA modification GTPase MnmE (464 aa).

Positions 25, 87, and 130 each coordinate (6S)-5-formyl-5,6,7,8-tetrahydrofolate. Residues 226–386 (GLSVVLAGQP…LRAELLRIAG (161 aa)) enclose the TrmE-type G domain. Residue N236 participates in K(+) binding. Residues 236 to 241 (NVGKSS), 255 to 261 (TPIAGTT), and 280 to 283 (DTAG) contribute to the GTP site. S240 is a binding site for Mg(2+). Residues T255, I257, and T260 each coordinate K(+). A Mg(2+)-binding site is contributed by T261. A (6S)-5-formyl-5,6,7,8-tetrahydrofolate-binding site is contributed by K464.

It belongs to the TRAFAC class TrmE-Era-EngA-EngB-Septin-like GTPase superfamily. TrmE GTPase family. Homodimer. Heterotetramer of two MnmE and two MnmG subunits. K(+) serves as cofactor.

Its subcellular location is the cytoplasm. Exhibits a very high intrinsic GTPase hydrolysis rate. Involved in the addition of a carboxymethylaminomethyl (cmnm) group at the wobble position (U34) of certain tRNAs, forming tRNA-cmnm(5)s(2)U34. The chain is tRNA modification GTPase MnmE from Burkholderia lata (strain ATCC 17760 / DSM 23089 / LMG 22485 / NCIMB 9086 / R18194 / 383).